A 318-amino-acid chain; its full sequence is Homoserine kinase (318 aa).

Pro-97–Cys-107 contacts ATP.

It belongs to the GHMP kinase family. Homoserine kinase subfamily.

It localises to the cytoplasm. It carries out the reaction L-homoserine + ATP = O-phospho-L-homoserine + ADP + H(+). Its pathway is amino-acid biosynthesis; L-threonine biosynthesis; L-threonine from L-aspartate: step 4/5. Catalyzes the ATP-dependent phosphorylation of L-homoserine to L-homoserine phosphate. The chain is Homoserine kinase from Vibrio parahaemolyticus serotype O3:K6 (strain RIMD 2210633).